A 246-amino-acid chain; its full sequence is 5'-nucleotidase SurE (246 aa).

Residues D8, D9, S39, and N91 each contribute to the a divalent metal cation site.

This sequence belongs to the SurE nucleotidase family. It depends on a divalent metal cation as a cofactor.

It is found in the cytoplasm. The enzyme catalyses a ribonucleoside 5'-phosphate + H2O = a ribonucleoside + phosphate. In terms of biological role, nucleotidase that shows phosphatase activity on nucleoside 5'-monophosphates. The protein is 5'-nucleotidase SurE of Actinobacillus succinogenes (strain ATCC 55618 / DSM 22257 / CCUG 43843 / 130Z).